The chain runs to 562 residues: Pentatricopeptide repeat-containing protein At3g22670, mitochondrial (562 aa).

A mitochondrion-targeting transit peptide spans 1–31; it reads MLTKLRISKLVSYTLPRRIFQRRFLVTNNTA. PPR repeat units follow at residues 165–199, 202–232, 238–268, 272–306, 307–341, 342–376, 377–411, 412–446, 450–484, and 485–519; these read SGHT…EESK, TLDT…MEKS, DTIA…LFDT, DART…EFTP, DVVT…GCNP, NVVT…GCVP, DAKF…GVRR, DVLV…EGES, NVET…DVSI, and DVST…GMVP.

The protein belongs to the PPR family. P subfamily.

The protein resides in the mitochondrion. In Arabidopsis thaliana (Mouse-ear cress), this protein is Pentatricopeptide repeat-containing protein At3g22670, mitochondrial.